Consider the following 404-residue polypeptide: Multidrug resistance protein MdtG (404 aa).

The next 11 membrane-spanning stretches (helical) occupy residues 19–39 (LGCF…PLYV), 56–76 (LVFS…GGLA), 90–110 (LGMA…QFLI), 113–133 (ALLG…ATQA), 144–164 (TLST…GLLA), 171–191 (PVFF…FFFI), 222–242 (LFVT…ILTL), 254–274 (IAFI…LSAP), 288–308 (ILIV…FVQT), 317–337 (FLLG…LVYN), and 376–396 (AVFC…WNSL).

The protein belongs to the major facilitator superfamily. DHA1 family. MdtG (TC 2.A.1.2.20) subfamily.

Its subcellular location is the cell inner membrane. The chain is Multidrug resistance protein MdtG from Salmonella paratyphi A (strain ATCC 9150 / SARB42).